A 482-amino-acid polypeptide reads, in one-letter code: 2-succinylbenzoate--CoA ligase (482 aa).

This sequence belongs to the ATP-dependent AMP-binding enzyme family. MenE subfamily.

The enzyme catalyses 2-succinylbenzoate + ATP + CoA = 2-succinylbenzoyl-CoA + AMP + diphosphate. It functions in the pathway quinol/quinone metabolism; 1,4-dihydroxy-2-naphthoate biosynthesis; 1,4-dihydroxy-2-naphthoate from chorismate: step 5/7. It participates in quinol/quinone metabolism; menaquinone biosynthesis. In terms of biological role, converts 2-succinylbenzoate (OSB) to 2-succinylbenzoyl-CoA (OSB-CoA). The polypeptide is 2-succinylbenzoate--CoA ligase (Bacillus thuringiensis subsp. konkukian (strain 97-27)).